The chain runs to 564 residues: Dihydroxy-acid dehydratase (564 aa).

Cys53 is a [2Fe-2S] cluster binding site. Asp85 provides a ligand contact to Mg(2+). Cys126 lines the [2Fe-2S] cluster pocket. Asp127 and Lys128 together coordinate Mg(2+). Lys128 is modified (N6-carboxylysine). Cys203 serves as a coordination point for [2Fe-2S] cluster. Residue Glu454 participates in Mg(2+) binding. The Proton acceptor role is filled by Ser480.

This sequence belongs to the IlvD/Edd family. Homodimer. The cofactor is [2Fe-2S] cluster. Mg(2+) is required as a cofactor.

It carries out the reaction (2R)-2,3-dihydroxy-3-methylbutanoate = 3-methyl-2-oxobutanoate + H2O. The enzyme catalyses (2R,3R)-2,3-dihydroxy-3-methylpentanoate = (S)-3-methyl-2-oxopentanoate + H2O. Its pathway is amino-acid biosynthesis; L-isoleucine biosynthesis; L-isoleucine from 2-oxobutanoate: step 3/4. It participates in amino-acid biosynthesis; L-valine biosynthesis; L-valine from pyruvate: step 3/4. Its function is as follows. Functions in the biosynthesis of branched-chain amino acids. Catalyzes the dehydration of (2R,3R)-2,3-dihydroxy-3-methylpentanoate (2,3-dihydroxy-3-methylvalerate) into 2-oxo-3-methylpentanoate (2-oxo-3-methylvalerate) and of (2R)-2,3-dihydroxy-3-methylbutanoate (2,3-dihydroxyisovalerate) into 2-oxo-3-methylbutanoate (2-oxoisovalerate), the penultimate precursor to L-isoleucine and L-valine, respectively. This is Dihydroxy-acid dehydratase from Mycobacterium ulcerans (strain Agy99).